The primary structure comprises 284 residues: Pseudopaline exporter CntI (284 aa).

10 helical membrane passes run 2 to 22, 34 to 54, 74 to 94, 96 to 116, 122 to 142, 147 to 167, 179 to 199, 209 to 229, 236 to 256, and 259 to 279; these read VLDL…TFSV, LPAA…IYLL, GVMG…IPLA, ASIL…LFLG, AVYW…KPFS, SVYA…SVAI, IVFY…WNDF, GLLL…TRAF, IVAV…WLFW, and VPDA…IALS. EamA domains follow at residues 8 to 138 and 151 to 279; these read SGVL…LMIV and VVGL…IALS.

This sequence belongs to the EamA transporter family.

The protein localises to the cell inner membrane. Functionally, transports the metallophore pseudopaline, which is involved in the acquisition of nickel and zinc, and thus enables bacterial growth inside the host, where metal access is limited. Is probably involved in the export of pseudopaline. Essential for iron acquisition during the interaction with airway mucus secretions (AMS). This is Pseudopaline exporter CntI from Pseudomonas aeruginosa (strain ATCC 15692 / DSM 22644 / CIP 104116 / JCM 14847 / LMG 12228 / 1C / PRS 101 / PAO1).